A 121-amino-acid chain; its full sequence is Small ribosomal subunit protein uS13 (121 aa).

The interval 92–121 is disordered; it reads RKGLPVRGQSSKTNARTVKGPRKTVANKKK. A compositionally biased stretch (basic residues) spans 110 to 121; that stretch reads KGPRKTVANKKK.

This sequence belongs to the universal ribosomal protein uS13 family. Part of the 30S ribosomal subunit. Forms a loose heterodimer with protein S19. Forms two bridges to the 50S subunit in the 70S ribosome.

In terms of biological role, located at the top of the head of the 30S subunit, it contacts several helices of the 16S rRNA. In the 70S ribosome it contacts the 23S rRNA (bridge B1a) and protein L5 of the 50S subunit (bridge B1b), connecting the 2 subunits; these bridges are implicated in subunit movement. Contacts the tRNAs in the A and P-sites. The sequence is that of Small ribosomal subunit protein uS13 from Mycoplasma capricolum subsp. capricolum (strain California kid / ATCC 27343 / NCTC 10154).